Here is a 499-residue protein sequence, read N- to C-terminus: Maturase K (499 aa).

This sequence belongs to the intron maturase 2 family. MatK subfamily.

The protein resides in the plastid. Its subcellular location is the chloroplast. Usually encoded in the trnK tRNA gene intron. Probably assists in splicing its own and other chloroplast group II introns. The chain is Maturase K from Camellia sinensis (Tea plant).